Reading from the N-terminus, the 79-residue chain is Large ribosomal subunit protein bL31 (79 aa).

This sequence belongs to the bacterial ribosomal protein bL31 family. Type A subfamily. In terms of assembly, part of the 50S ribosomal subunit.

Functionally, binds the 23S rRNA. This Trichormus variabilis (strain ATCC 29413 / PCC 7937) (Anabaena variabilis) protein is Large ribosomal subunit protein bL31.